A 914-amino-acid polypeptide reads, in one-letter code: Isoleucine--tRNA ligase (914 aa).

The 'HIGH' region signature appears at 57 to 67 (PYANGQIHMGH). Residue glutamate 554 participates in L-isoleucyl-5'-AMP binding. Positions 595 to 599 (KMSKS) match the 'KMSKS' region motif. Lysine 598 serves as a coordination point for ATP. Zn(2+)-binding residues include cysteine 883, cysteine 886, cysteine 904, and cysteine 907.

This sequence belongs to the class-I aminoacyl-tRNA synthetase family. IleS type 1 subfamily. As to quaternary structure, monomer. It depends on Zn(2+) as a cofactor.

It localises to the cytoplasm. It catalyses the reaction tRNA(Ile) + L-isoleucine + ATP = L-isoleucyl-tRNA(Ile) + AMP + diphosphate. Functionally, catalyzes the attachment of isoleucine to tRNA(Ile). As IleRS can inadvertently accommodate and process structurally similar amino acids such as valine, to avoid such errors it has two additional distinct tRNA(Ile)-dependent editing activities. One activity is designated as 'pretransfer' editing and involves the hydrolysis of activated Val-AMP. The other activity is designated 'posttransfer' editing and involves deacylation of mischarged Val-tRNA(Ile). The polypeptide is Isoleucine--tRNA ligase (Macrococcus caseolyticus (strain JCSC5402) (Macrococcoides caseolyticum)).